The following is a 1648-amino-acid chain: Homeostatic regulator of DAG (1648 aa).

The DMAP1-binding domain occupies 5–101 (IPPTLPLDLQ…YRVTTINSTS (97 aa)). 3 N-linked (GlcNAc...) asparagine glycosylation sites follow: Asn28, Asn71, and Asn98. Disordered regions lie at residues 52-73 (PYTP…RNTS) and 96-130 (TINS…ENGS). A compositionally biased stretch (basic residues) spans 60–71 (NSRKSKHLHRRN). Polar residues-rich tracts occupy residues 96–105 (TINSTSANNT) and 113–128 (YTAS…SDEN). Ser99 carries the post-translational modification Phosphoserine. Residues Asn128, Asn151, and Asn209 are each glycosylated (N-linked (GlcNAc...) asparagine). The tract at residues 158-893 (AMTDSLPLIL…VEKKFLNNDL (736 aa)) is fatty acyl-AMP ligase-like domain 1. The chain crosses the membrane as a helical span at residues 228–248 (VIEFTIALLGCFISGMAAVPV). N-linked (GlcNAc...) asparagine glycosylation is found at Asn288, Asn328, Asn575, Asn644, and Asn730. Ser751 carries the phosphoserine modification. N-linked (GlcNAc...) asparagine glycans are attached at residues Asn881, Asn917, Asn995, and Asn1009. The tract at residues 950 to 1648 (VKPKLALQCS…LLSDYEKDNI (699 aa)) is fatty acyl-AMP ligase-like domain 2. The helical transmembrane segment at 1061-1081 (YVAMIMACLYCNLLVIPLPSV) threads the bilayer. Asn1198 carries N-linked (GlcNAc...) asparagine glycosylation. A helical transmembrane segment spans residues 1224-1244 (GLGFMFSCLLGIYTGASTCLF). N-linked (GlcNAc...) asparagine glycosylation is found at Asn1301, Asn1302, Asn1447, Asn1472, Asn1488, Asn1565, Asn1597, and Asn1634.

It localises to the vacuole membrane. The protein resides in the mitochondrion membrane. Functionally, homeostatic regulator of a chemically distinct subset of diacylglycerols (DAGs) with C36 chain length that prevents the toxic accumulation of these specific DAGs in the logarithmic growth phase, which otherwise leads to endoplasmic reticulum stress. Maintains the basal level of DAG subspecies by directly facilitating DAG to triacylglycerol (TAG) conversion process, possibly via adenylation activity of its FLD domains. Does not affect the abundant DAG species (representing over 90% of total DAG pool), comprised of C32 and C34 chain lengths. Required for vacuole fusion-mediated osmoadaptation. The sequence is that of Homeostatic regulator of DAG from Saccharomyces cerevisiae (strain ATCC 204508 / S288c) (Baker's yeast).